Consider the following 377-residue polypeptide: Succinyl-diaminopimelate desuccinylase (377 aa).

His67 is a Zn(2+) binding site. Residue Asp69 is part of the active site. Asp100 lines the Zn(2+) pocket. The Proton acceptor role is filled by Glu134. 3 residues coordinate Zn(2+): Glu135, Glu163, and His349.

This sequence belongs to the peptidase M20A family. DapE subfamily. As to quaternary structure, homodimer. Zn(2+) is required as a cofactor. It depends on Co(2+) as a cofactor.

The catalysed reaction is N-succinyl-(2S,6S)-2,6-diaminopimelate + H2O = (2S,6S)-2,6-diaminopimelate + succinate. It participates in amino-acid biosynthesis; L-lysine biosynthesis via DAP pathway; LL-2,6-diaminopimelate from (S)-tetrahydrodipicolinate (succinylase route): step 3/3. Its function is as follows. Catalyzes the hydrolysis of N-succinyl-L,L-diaminopimelic acid (SDAP), forming succinate and LL-2,6-diaminopimelate (DAP), an intermediate involved in the bacterial biosynthesis of lysine and meso-diaminopimelic acid, an essential component of bacterial cell walls. The polypeptide is Succinyl-diaminopimelate desuccinylase (Mannheimia succiniciproducens (strain KCTC 0769BP / MBEL55E)).